A 435-amino-acid polypeptide reads, in one-letter code: Proline--tRNA ligase (435 aa).

The protein belongs to the class-II aminoacyl-tRNA synthetase family. ProS type 2 subfamily. In terms of assembly, homodimer.

The protein resides in the cytoplasm. It carries out the reaction tRNA(Pro) + L-proline + ATP = L-prolyl-tRNA(Pro) + AMP + diphosphate. Catalyzes the attachment of proline to tRNA(Pro) in a two-step reaction: proline is first activated by ATP to form Pro-AMP and then transferred to the acceptor end of tRNA(Pro). This is Proline--tRNA ligase from Rhodospirillum rubrum (strain ATCC 11170 / ATH 1.1.1 / DSM 467 / LMG 4362 / NCIMB 8255 / S1).